We begin with the raw amino-acid sequence, 61 residues long: uncharacterized protein (61 aa).

This sequence belongs to the DUP/COS family.

This is an uncharacterized protein from Saccharomyces cerevisiae (strain ATCC 204508 / S288c) (Baker's yeast).